The primary structure comprises 105 residues: Translation initiation factor 1A (105 aa).

Positions 12-87 (TRVRTPREEN…QKCDIIWRYT (76 aa)) constitute an S1-like domain.

The protein belongs to the eIF-1A family.

In terms of biological role, seems to be required for maximal rate of protein biosynthesis. Enhances ribosome dissociation into subunits and stabilizes the binding of the initiator Met-tRNA(I) to 40 S ribosomal subunits. The protein is Translation initiation factor 1A (eIF1A) of Methanococcus aeolicus (strain ATCC BAA-1280 / DSM 17508 / OCM 812 / Nankai-3).